The chain runs to 1480 residues: ABC transporter G family member 49 (1480 aa).

Polar residues predominate over residues 1–18; sequence MHTTTQATPQKSMVMTTT. Disordered stretches follow at residues 1–42, 60–81, and 104–124; these read MHTT…AGSS, VSGE…EDDE, and SSTR…GGAA. Gly residues-rich tracts occupy residues 63 to 73 and 107 to 123; these read ELGGGGGGGGG and RGGG…GGGA. Residues 212-485 form the ABC transporter 1 domain; it reads LAAKLGFSHH…FESCGFKCPE (274 aa). Position 245–252 (245–252) interacts with ATP; that stretch reads GPPGCGKT. The ABC transmembrane type-2 1 domain maps to 563–775; that stretch reads HLLKACFDRE…AEIGLTGNEF (213 aa). The next 6 membrane-spanning stretches (helical) occupy residues 581-601, 619-639, 656-676, 699-719, 725-745, and 811-831; these read FLHI…GTVF, SLFY…VMSI, GWAY…VAAL, LLVL…VGSY, VGPI…GFLI, and VAAL…GLTI. Residues 877–1129 form the ABC transporter 2 domain; it reads ISFQDVNYYV…KVIQYFQSIP (253 aa). An ATP-binding site is contributed by 922–929; the sequence is GVTGAGKT. One can recognise an ABC transmembrane type-2 2 domain in the interval 1202-1418; sequence EQFKACLWKQ…TLNLLFTTQF (217 aa). The next 7 helical transmembrane spans lie at 1226-1246, 1254-1274, 1311-1331, 1340-1360, 1368-1388, 1396-1416, and 1449-1469; these read IVFM…QGNI, GLFT…INNS, IPYV…TIGY, WFFY…MLIV, VASI…GFVM, WWIW…LFTT, and LLPL…ILYG.

It belongs to the ABC transporter superfamily. ABCG family. PDR (TC 3.A.1.205) subfamily.

The protein resides in the membrane. Functionally, may be a general defense protein. This Oryza sativa subsp. japonica (Rice) protein is ABC transporter G family member 49.